A 351-amino-acid polypeptide reads, in one-letter code: Peroxisomal membrane protein PEX14 (351 aa).

The tract at residues 54 to 75 (KARTGTVQASPSQQSVVPPRPP) is disordered. A compositionally biased stretch (low complexity) spans 60 to 70 (VQASPSQQSVV). Residues 83-91 (APPLPERDW) carry the SH3-binding motif. The segment at 243-351 (APQLSTPPSE…RGIPAWQLNA (109 aa)) is disordered. Positions 245–258 (QLSTPPSESTSRQS) are enriched in polar residues. The segment covering 283–293 (VLSREKDKDVN) has biased composition (basic and acidic residues). Over residues 294 to 303 (SDSIAQYEQR) the composition is skewed to polar residues. A compositionally biased stretch (low complexity) spans 320 to 334 (SASNGGSSTTSGVAG).

This sequence belongs to the peroxin-14 family. As to quaternary structure, interacts with PEX13 (via SH3 domain); forming the PEX13-PEX14 docking complex. Interacts with PEX5 (via WxxxF/Y motifs).

Its subcellular location is the peroxisome membrane. Its function is as follows. Component of the PEX13-PEX14 docking complex, a translocon channel that specifically mediates the import of peroxisomal cargo proteins bound to PEX5 receptor. The PEX13-PEX14 docking complex forms a large import pore which can be opened to a diameter of about 9 nm. Mechanistically, PEX5 receptor along with cargo proteins associates with the PEX14 subunit of the PEX13-PEX14 docking complex in the cytosol, leading to the insertion of the receptor into the organelle membrane with the concomitant translocation of the cargo into the peroxisome matrix. The chain is Peroxisomal membrane protein PEX14 from Pichia angusta (Yeast).